The primary structure comprises 348 residues: D-erythrose-4-phosphate dehydrogenase (348 aa).

NAD(+) is bound by residues 12-13 (RI) and Arg-81. Substrate-binding positions include 154–156 (SCT), Arg-200, 213–214 (TK), and Arg-236. Cys-155 (nucleophile) is an active-site residue. Position 318 (Asn-318) interacts with NAD(+).

The protein belongs to the glyceraldehyde-3-phosphate dehydrogenase family. Epd subfamily. In terms of assembly, homotetramer.

The protein localises to the cytoplasm. It carries out the reaction D-erythrose 4-phosphate + NAD(+) + H2O = 4-phospho-D-erythronate + NADH + 2 H(+). The protein operates within cofactor biosynthesis; pyridoxine 5'-phosphate biosynthesis; pyridoxine 5'-phosphate from D-erythrose 4-phosphate: step 1/5. Catalyzes the NAD-dependent conversion of D-erythrose 4-phosphate to 4-phosphoerythronate. The polypeptide is D-erythrose-4-phosphate dehydrogenase (Salmonella dublin (strain CT_02021853)).